The chain runs to 814 residues: Kinesin-like protein KIF6 (814 aa).

Residues 5-345 (TIQIFARVKP…CRFAQRVALI (341 aa)) enclose the Kinesin motor domain. Residue 97-104 (GQTGSGKT) participates in ATP binding. 3 coiled-coil regions span residues 356–385 (NPRL…QRTE), 456–494 (LKEE…EALH), and 588–683 (EAKA…KEFE). The interval 752–788 (LPSPCPSPHSQKQSSTSTPLEDSIPKRPVSSIPLTGD) is disordered. The span at 759–771 (PHSQKQSSTSTPL) shows a compositional bias: polar residues.

This sequence belongs to the TRAFAC class myosin-kinesin ATPase superfamily. Kinesin family.

It localises to the cytoplasm. It is found in the cytoskeleton. The chain is Kinesin-like protein KIF6 (KIF6) from Homo sapiens (Human).